The primary structure comprises 528 residues: Acid-sensing ion channel 1 (528 aa).

The Cytoplasmic portion of the chain corresponds to 1 to 49; sequence MELKAEEEEVGGVQPVSIQAFASSSTLHGLAHIFSYERLSLKRALWALC. The chain crosses the membrane as a helical span at residues 50 to 66; the sequence is FLGSLAVLLCVCTERVQ. Residues 67-427 are Extracellular-facing; the sequence is YYFHYHHVTK…ETIEQKKAYE (361 aa). Disulfide bonds link Cys-93-Cys-194, Cys-172-Cys-179, Cys-290-Cys-367, Cys-310-Cys-363, Cys-314-Cys-361, Cys-323-Cys-345, and Cys-325-Cys-337. 2 N-linked (GlcNAc...) asparagine glycosylation sites follow: Asn-368 and Asn-395. The discontinuously helical transmembrane segment at 428–458 threads the bilayer; the sequence is IAGLLGDIGGQMGLFIGASILTVLELFDYAY. The GAS motif; ion selectivity filter motif lies at 444 to 446; that stretch reads GAS. Residues 459–528 lie on the Cytoplasmic side of the membrane; the sequence is EVIKHKLCRR…ARGTFEDFTC (70 aa). The residue at position 479 (Ser-479) is a Phosphoserine; by PKA. Ser-499 is modified (phosphoserine).

The protein belongs to the amiloride-sensitive sodium channel (TC 1.A.6) family. ASIC1 subfamily. As to quaternary structure, forms functional homotrimeric channels. Forms heterotrimers with other ASIC proteins, resulting in channels with distinct properties. Interacts with PICK1; regulates ASIC1 clustering in membranes. Interacts with STOM; alters heterotrimeric channels activity. In terms of processing, pH-gating could be regulated by serine proteases. Phosphorylation by PKA regulates interaction with PICK1 and subcellular localization. Phosphorylation by PKC may regulate the channel. As to expression, expressed in neurons throughout the central and peripheral nervous system.

The protein localises to the cell membrane. The protein resides in the postsynaptic cell membrane. Its subcellular location is the cell projection. It is found in the dendrite. The catalysed reaction is Na(+)(in) = Na(+)(out). The enzyme catalyses K(+)(in) = K(+)(out). It catalyses the reaction Li(+)(in) = Li(+)(out). It carries out the reaction Ca(2+)(in) = Ca(2+)(out). With respect to regulation, potentiated by FMRFamide-related neuropeptides, which are induced during inflammation and modulate pain responses. Inhibited by the diuretic drug amiloride. Spider venom psalmotoxin-1 inhibits the channel by locking it in its desensitized conformation. The homotrimeric channel is inhibited by the spider venom pi-theraphotoxin-Hm3a. Homotrimeric and heterotrimeric (with ASIC2 isoform 1) channels are inhibited by the snake venom mambalgin-1, which prevents proton-induced transitions from the resting closed state to the active and/or desensitized states. Inhibited by Texas coral snake toxin MitTx1. Its function is as follows. Forms voltage-independent, pH-gated trimeric sodium channels that act as postsynaptic excitatory receptors in the nervous system, playing a crucial role in regulating synaptic plasticity, learning, and memory. Upon extracellular pH drop this channel elicits transient, fast activating, and completely desensitizing inward currents. Displays high selectivity for sodium ions but can also permit the permeation of other cations. Regulates more or less directly intracellular calcium concentration and CaMKII phosphorylation, and thereby the density of dendritic spines. Modulates neuronal activity in the circuits underlying innate fear. Has high selectivity for sodium ions, but can also be permeable to other cations including calcium, lithium and potassium. Functionally, produces acid activated currents with a reduced amplitude and inactivates faster. Has high selectivity for sodium ions but also supports a calcium-mediated current which is sustained and maintained as long as acidic conditions are present. Also potentially permeable to lithium and potassium. In terms of biological role, has no measurable proton-gated sodium channel activity in vitro. This is Acid-sensing ion channel 1 from Homo sapiens (Human).